Here is a 290-residue protein sequence, read N- to C-terminus: Probable branched-chain-amino-acid aminotransferase (290 aa).

Lys155 is modified (N6-(pyridoxal phosphate)lysine).

Belongs to the class-IV pyridoxal-phosphate-dependent aminotransferase family. It depends on pyridoxal 5'-phosphate as a cofactor.

It catalyses the reaction L-leucine + 2-oxoglutarate = 4-methyl-2-oxopentanoate + L-glutamate. It carries out the reaction L-isoleucine + 2-oxoglutarate = (S)-3-methyl-2-oxopentanoate + L-glutamate. The enzyme catalyses L-valine + 2-oxoglutarate = 3-methyl-2-oxobutanoate + L-glutamate. The protein operates within amino-acid biosynthesis; L-isoleucine biosynthesis; L-isoleucine from 2-oxobutanoate: step 4/4. It participates in amino-acid biosynthesis; L-leucine biosynthesis; L-leucine from 3-methyl-2-oxobutanoate: step 4/4. Its pathway is amino-acid biosynthesis; L-valine biosynthesis; L-valine from pyruvate: step 4/4. Its function is as follows. Acts on leucine, isoleucine and valine. The sequence is that of Probable branched-chain-amino-acid aminotransferase (ilvE) from Rickettsia conorii (strain ATCC VR-613 / Malish 7).